A 90-amino-acid polypeptide reads, in one-letter code: Putative beta-neurotoxin RjAa14F (90 aa).

Positions 1 to 18 (MKILIFIIASFMLIGVEC) are cleaved as a signal peptide. Residues 19 to 89 (KEGYPTNSEG…VWDPNNNKCV (71 aa)) enclose the LCN-type CS-alpha/beta domain. Intrachain disulfides connect cysteine 29–cysteine 88, cysteine 33–cysteine 62, cysteine 40–cysteine 69, and cysteine 44–cysteine 71.

It belongs to the long (4 C-C) scorpion toxin superfamily. Sodium channel inhibitor family. Beta subfamily. Expressed by the venom gland.

It localises to the secreted. Beta toxins bind voltage-independently at site-4 of sodium channels (Nav) and shift the voltage of activation toward more negative potentials thereby affecting sodium channel activation and promoting spontaneous and repetitive firing. This is Putative beta-neurotoxin RjAa14F from Rhopalurus junceus (Caribbean blue scorpion).